The sequence spans 689 residues: Glycine--tRNA ligase beta subunit (689 aa).

The protein belongs to the class-II aminoacyl-tRNA synthetase family. In terms of assembly, tetramer of two alpha and two beta subunits.

Its subcellular location is the cytoplasm. The catalysed reaction is tRNA(Gly) + glycine + ATP = glycyl-tRNA(Gly) + AMP + diphosphate. This is Glycine--tRNA ligase beta subunit from Shigella boydii serotype 18 (strain CDC 3083-94 / BS512).